A 264-amino-acid polypeptide reads, in one-letter code: Small ribosomal subunit protein eS1B (264 aa).

The tract at residues 233–264 is disordered; that stretch reads GEGGGSGKPAADETGAKVERADGYEPPVQESV. Positions 242–255 are enriched in basic and acidic residues; that stretch reads AADETGAKVERADG.

The protein belongs to the eukaryotic ribosomal protein eS1 family. Component of the small ribosomal subunit. Mature ribosomes consist of a small (40S) and a large (60S) subunit. The 40S subunit contains about 33 different proteins and 1 molecule of RNA (18S). The 60S subunit contains about 49 different proteins and 3 molecules of RNA (28S, 5.8S and 5S). Part of the small subunit (SSU) processome, composed of more than 70 proteins and the RNA chaperone small nucleolar RNA (snoRNA) U3.

It is found in the cytoplasm. The protein resides in the nucleus. It localises to the nucleolus. Component of the small ribosomal subunit. The ribosome is a large ribonucleoprotein complex responsible for the synthesis of proteins in the cell. Part of the small subunit (SSU) processome, first precursor of the small eukaryotic ribosomal subunit. During the assembly of the SSU processome in the nucleolus, many ribosome biogenesis factors, an RNA chaperone and ribosomal proteins associate with the nascent pre-rRNA and work in concert to generate RNA folding, modifications, rearrangements and cleavage as well as targeted degradation of pre-ribosomal RNA by the RNA exosome. May play a role during erythropoiesis. This Xenopus laevis (African clawed frog) protein is Small ribosomal subunit protein eS1B (rps3a-b).